A 264-amino-acid chain; its full sequence is AA9 family lytic polysaccharide monooxygenase A (264 aa).

An N-terminal signal peptide occupies residues methionine 1 to alanine 18. Histidine 19 contacts Cu(2+). N-linked (GlcNAc...) asparagine glycosylation is found at asparagine 51 and asparagine 75. Cysteine 59 and cysteine 182 are disulfide-bonded. Histidine 96 is a Cu(2+) binding site. N-linked (GlcNAc...) asparagine glycosylation is present at asparagine 110. Histidine 162 is an O2 binding site. Tyrosine 179 is a Cu(2+) binding site. Residues asparagine 218 and asparagine 251 are each glycosylated (N-linked (GlcNAc...) asparagine).

The protein belongs to the polysaccharide monooxygenase AA9 family. Cu(2+) serves as cofactor.

It is found in the secreted. The enzyme catalyses [(1-&gt;4)-beta-D-glucosyl]n+m + reduced acceptor + O2 = 4-dehydro-beta-D-glucosyl-[(1-&gt;4)-beta-D-glucosyl]n-1 + [(1-&gt;4)-beta-D-glucosyl]m + acceptor + H2O.. Functionally, lytic polysaccharide monooxygenase (LPMO) that depolymerizes crystalline and amorphous polysaccharides via the oxidation of scissile alpha- or beta-(1-4)-glycosidic bonds, yielding C4 oxidation products. Catalysis by LPMOs requires the reduction of the active-site copper from Cu(II) to Cu(I) by a reducing agent and H(2)O(2) or O(2) as a cosubstrate. Active on cellulose and cello-oligosaccharides, as well as plant cell wall-derived hemicellulosic polysaccharides. Also active on cello-oligosaccharides such as cellohexaose, cellopentaose or cellotetraose. The polypeptide is AA9 family lytic polysaccharide monooxygenase A (Phanerochaete carnosa (strain HHB-10118-sp) (White-rot fungus)).